The primary structure comprises 114 residues: Monothiol glutaredoxin-S8 (114 aa).

The region spanning 1 to 113 (MDRVTRLASQ…PLLRDAGALW (113 aa)) is the Glutaredoxin domain. Residue cysteine 21 participates in [2Fe-2S] cluster binding.

It belongs to the glutaredoxin family. CC-type subfamily.

It localises to the cytoplasm. Functionally, may only reduce GSH-thiol disulfides, but not protein disulfides. This Oryza sativa subsp. japonica (Rice) protein is Monothiol glutaredoxin-S8 (GRXS8).